A 336-amino-acid polypeptide reads, in one-letter code: 4-hydroxy-3-methylbut-2-enyl diphosphate reductase (336 aa).

[4Fe-4S] cluster is bound at residue Cys32. Positions 61 and 94 each coordinate (2E)-4-hydroxy-3-methylbut-2-enyl diphosphate. His61 and His94 together coordinate dimethylallyl diphosphate. Isopentenyl diphosphate-binding residues include His61 and His94. A [4Fe-4S] cluster-binding site is contributed by Cys116. His148 provides a ligand contact to (2E)-4-hydroxy-3-methylbut-2-enyl diphosphate. Position 148 (His148) interacts with dimethylallyl diphosphate. His148 serves as a coordination point for isopentenyl diphosphate. Catalysis depends on Glu150, which acts as the Proton donor. A (2E)-4-hydroxy-3-methylbut-2-enyl diphosphate-binding site is contributed by Thr189. [4Fe-4S] cluster is bound at residue Cys219. Ser247, Ser248, Asn249, and Ser292 together coordinate (2E)-4-hydroxy-3-methylbut-2-enyl diphosphate. Residues Ser247, Ser248, Asn249, and Ser292 each contribute to the dimethylallyl diphosphate site. Isopentenyl diphosphate contacts are provided by Ser247, Ser248, Asn249, and Ser292.

This sequence belongs to the IspH family. [4Fe-4S] cluster is required as a cofactor.

It catalyses the reaction isopentenyl diphosphate + 2 oxidized [2Fe-2S]-[ferredoxin] + H2O = (2E)-4-hydroxy-3-methylbut-2-enyl diphosphate + 2 reduced [2Fe-2S]-[ferredoxin] + 2 H(+). The enzyme catalyses dimethylallyl diphosphate + 2 oxidized [2Fe-2S]-[ferredoxin] + H2O = (2E)-4-hydroxy-3-methylbut-2-enyl diphosphate + 2 reduced [2Fe-2S]-[ferredoxin] + 2 H(+). It functions in the pathway isoprenoid biosynthesis; dimethylallyl diphosphate biosynthesis; dimethylallyl diphosphate from (2E)-4-hydroxy-3-methylbutenyl diphosphate: step 1/1. Its pathway is isoprenoid biosynthesis; isopentenyl diphosphate biosynthesis via DXP pathway; isopentenyl diphosphate from 1-deoxy-D-xylulose 5-phosphate: step 6/6. Its function is as follows. Catalyzes the conversion of 1-hydroxy-2-methyl-2-(E)-butenyl 4-diphosphate (HMBPP) into a mixture of isopentenyl diphosphate (IPP) and dimethylallyl diphosphate (DMAPP). Acts in the terminal step of the DOXP/MEP pathway for isoprenoid precursor biosynthesis. The polypeptide is 4-hydroxy-3-methylbut-2-enyl diphosphate reductase (Gluconobacter oxydans (strain 621H) (Gluconobacter suboxydans)).